The following is a 141-amino-acid chain: uncharacterized protein (141 aa).

A run of 3 helical transmembrane segments spans residues 32–52 (LIVLIFSILIAISAYISTSII), 69–89 (IIALISTFIGGIVAWLIIAGF), and 109–129 (FTGYGFLPNIVGALITIPIAY).

The protein resides in the cell membrane. This is an uncharacterized protein from Methanocaldococcus jannaschii (strain ATCC 43067 / DSM 2661 / JAL-1 / JCM 10045 / NBRC 100440) (Methanococcus jannaschii).